Here is a 257-residue protein sequence, read N- to C-terminus: MLTLLSPAKKLLSISKHYSKETSNPLLLDKALQLVKIMKLKSVEQIADLMDLSKQLAELNYERYQNFDLKNNPMNHSYPALFLFQGDVYQGLNANSWKDEEIEYAQSHLGILSGLYGFLRPLDRIQPYRLEMGVNLENPAGKNLYAFWSKIVTNILNQILAEQSNPVLINLASTEYFKVVDEKKLSYPLVTINFYEQKNSELKMIGILAKKARGMMAKYIMQNRIDSIEQIKEFSESGYLFNKEISSPNSLNFIRIH.

The protein belongs to the UPF0246 family.

This is UPF0246 protein lpg1366 from Legionella pneumophila subsp. pneumophila (strain Philadelphia 1 / ATCC 33152 / DSM 7513).